The following is a 280-amino-acid chain: MPADIMEKNSSSPVAATPASVNTTPDKPKTASEHRKSSKPIMEKRRRARINESLSQLKTLILDALKKDSSRHSKLEKADILEMTVKHLRNLQRAQMTAALSTDPSVLGKYRAGFSECMNEVTRFLSTCEGVNTEVRTRLLGHLANCMTQINAMTYPGQPHPALQAPPPPPPGPGGPQHAPFAPPPPLVPIPGGAAPPPGGAPCKLGSPAGEAAKVFGGFQVVPAPDGQFAFLIPNGAFAHSGPVIPVYTSNSGTSVGPNAVSPSSGPSLTADSMWRPWRN.

The interval 1–44 (MPADIMEKNSSSPVAATPASVNTTPDKPKTASEHRKSSKPIMEK) is disordered. The span at 10-21 (SSSPVAATPASV) shows a compositional bias: low complexity. A compositionally biased stretch (basic and acidic residues) spans 26 to 35 (DKPKTASEHR). The bHLH domain maps to 34-91 (HRKSSKPIMEKRRRARINESLSQLKTLILDALKKDSSRHSKLEKADILEMTVKHLRNL). One can recognise an Orange domain in the interval 110–143 (YRAGFSECMNEVTRFLSTCEGVNTEVRTRLLGHL). Disordered regions lie at residues 157-200 (GQPH…PPGG) and 254-280 (TSVG…PWRN). Composition is skewed to pro residues over residues 164–174 (QAPPPPPPGPG) and 181–200 (FAPP…PPGG). Polar residues predominate over residues 254 to 271 (TSVGPNAVSPSSGPSLTA). Positions 275-278 (WRPW) match the WRPW motif motif.

In terms of assembly, transcription repression requires formation of a complex with a corepressor protein of the Groucho/TLE family. Interacts with SIRT1. Interacts (via WPRW motif) with TLE1, and more weakly with TLE2. Interacts with HES6. Interacts with an FA complex, composed of FANCA, FANCF, FANCG and FANCL, but not of FANCC, nor FANCE.

It is found in the nucleus. Its function is as follows. Transcriptional repressor of genes that require a bHLH protein for their transcription. May act as a negative regulator of myogenesis by inhibiting the functions of MYOD1 and ASH1. Binds DNA on N-box motifs: 5'-CACNAG-3' with high affinity and on E-box motifs: 5'-CANNTG-3' with low affinity. May play a role in a functional FA core complex response to DNA cross-link damage, being required for the stability and nuclear localization of FA core complex proteins, as well as for FANCD2 monoubiquitination in response to DNA damage. The chain is Transcription factor HES-1 (HES1) from Bos taurus (Bovine).